We begin with the raw amino-acid sequence, 120 residues long: NAD(P)H-quinone oxidoreductase subunit 3, chloroplastic (120 aa).

The next 3 membrane-spanning stretches (helical) occupy residues 9–29 (IFWA…LISG), 64–84 (MFAL…PWAM), and 88–108 (VLGV…IVGL).

This sequence belongs to the complex I subunit 3 family. As to quaternary structure, NDH is composed of at least 16 different subunits, 5 of which are encoded in the nucleus.

The protein resides in the plastid. The protein localises to the chloroplast thylakoid membrane. It carries out the reaction a plastoquinone + NADH + (n+1) H(+)(in) = a plastoquinol + NAD(+) + n H(+)(out). The enzyme catalyses a plastoquinone + NADPH + (n+1) H(+)(in) = a plastoquinol + NADP(+) + n H(+)(out). In terms of biological role, NDH shuttles electrons from NAD(P)H:plastoquinone, via FMN and iron-sulfur (Fe-S) centers, to quinones in the photosynthetic chain and possibly in a chloroplast respiratory chain. The immediate electron acceptor for the enzyme in this species is believed to be plastoquinone. Couples the redox reaction to proton translocation, and thus conserves the redox energy in a proton gradient. This Ceratophyllum demersum (Rigid hornwort) protein is NAD(P)H-quinone oxidoreductase subunit 3, chloroplastic.